Reading from the N-terminus, the 197-residue chain is Ribose 1,5-bisphosphate phosphokinase PhnN (197 aa).

Position 21-28 (21-28 (GPSGAGKD)) interacts with ATP.

It belongs to the ribose 1,5-bisphosphokinase family.

The catalysed reaction is alpha-D-ribose 1,5-bisphosphate + ATP = 5-phospho-alpha-D-ribose 1-diphosphate + ADP. It functions in the pathway metabolic intermediate biosynthesis; 5-phospho-alpha-D-ribose 1-diphosphate biosynthesis; 5-phospho-alpha-D-ribose 1-diphosphate from D-ribose 5-phosphate (route II): step 3/3. Functionally, catalyzes the phosphorylation of ribose 1,5-bisphosphate to 5-phospho-D-ribosyl alpha-1-diphosphate (PRPP). This is Ribose 1,5-bisphosphate phosphokinase PhnN from Rhizobium etli (strain CIAT 652).